A 216-amino-acid polypeptide reads, in one-letter code: Ras-related protein Rab11A (216 aa).

GTP-binding positions include 19-27 (GDSGVGKSN), 38-44 (CLESKST), 67-71 (DTAGQ), 125-128 (NKSD), and 155-157 (SAL). Residues 41–49 (SKSTIGVEF) carry the Effector region motif. S-geranylgeranyl cysteine attachment occurs at residues C213 and C214.

It belongs to the small GTPase superfamily. Rab family.

Its subcellular location is the cell membrane. This chain is Ras-related protein Rab11A (RAB11A), found in Nicotiana tabacum (Common tobacco).